A 522-amino-acid polypeptide reads, in one-letter code: 2-isopropylmalate synthase (522 aa).

In terms of domain architecture, Pyruvate carboxyltransferase spans 5 to 267 (VIIFDTTLRD…ETGINAKEIH (263 aa)). The Mn(2+) site is built by Asp-14, His-202, His-204, and Asn-238. Residues 392–522 (QLQQLVVQSD…MHKNRELGGV (131 aa)) are regulatory domain.

Belongs to the alpha-IPM synthase/homocitrate synthase family. LeuA type 1 subfamily. As to quaternary structure, homodimer. Mn(2+) serves as cofactor.

It localises to the cytoplasm. It catalyses the reaction 3-methyl-2-oxobutanoate + acetyl-CoA + H2O = (2S)-2-isopropylmalate + CoA + H(+). Its pathway is amino-acid biosynthesis; L-leucine biosynthesis; L-leucine from 3-methyl-2-oxobutanoate: step 1/4. Functionally, catalyzes the condensation of the acetyl group of acetyl-CoA with 3-methyl-2-oxobutanoate (2-ketoisovalerate) to form 3-carboxy-3-hydroxy-4-methylpentanoate (2-isopropylmalate). The chain is 2-isopropylmalate synthase from Shewanella sp. (strain ANA-3).